The chain runs to 602 residues: Elongation factor 4 (602 aa).

Residues 7-189 (KFIRNFSIIA…QLVVAIPPPV (183 aa)) form the tr-type G domain. GTP is bound by residues 19–24 (DHGKST) and 136–139 (NKID).

This sequence belongs to the TRAFAC class translation factor GTPase superfamily. Classic translation factor GTPase family. LepA subfamily.

The protein localises to the cell inner membrane. It carries out the reaction GTP + H2O = GDP + phosphate + H(+). Required for accurate and efficient protein synthesis under certain stress conditions. May act as a fidelity factor of the translation reaction, by catalyzing a one-codon backward translocation of tRNAs on improperly translocated ribosomes. Back-translocation proceeds from a post-translocation (POST) complex to a pre-translocation (PRE) complex, thus giving elongation factor G a second chance to translocate the tRNAs correctly. Binds to ribosomes in a GTP-dependent manner. The sequence is that of Elongation factor 4 from Coxiella burnetii (strain RSA 493 / Nine Mile phase I).